Consider the following 341-residue polypeptide: tRNA N6-adenosine threonylcarbamoyltransferase (341 aa).

Positions 111 and 115 each coordinate Fe cation. Substrate is bound by residues 133–137, Asp166, Gly179, Asp183, and Asn273; that span reads AVSGG. Asp301 is a binding site for Fe cation.

The protein belongs to the KAE1 / TsaD family. It depends on Fe(2+) as a cofactor.

It localises to the cytoplasm. It carries out the reaction L-threonylcarbamoyladenylate + adenosine(37) in tRNA = N(6)-L-threonylcarbamoyladenosine(37) in tRNA + AMP + H(+). In terms of biological role, required for the formation of a threonylcarbamoyl group on adenosine at position 37 (t(6)A37) in tRNAs that read codons beginning with adenine. Is involved in the transfer of the threonylcarbamoyl moiety of threonylcarbamoyl-AMP (TC-AMP) to the N6 group of A37, together with TsaE and TsaB. TsaD likely plays a direct catalytic role in this reaction. This is tRNA N6-adenosine threonylcarbamoyltransferase from Geobacter metallireducens (strain ATCC 53774 / DSM 7210 / GS-15).